Reading from the N-terminus, the 149-residue chain is Large ribosomal subunit protein bL20m (149 aa).

A mitochondrion-targeting transit peptide spans 1-9 (MVFLTTRLW).

The protein belongs to the bacterial ribosomal protein bL20 family. Component of the mitochondrial ribosome large subunit (39S) which comprises a 16S rRNA and about 50 distinct proteins. Interacts with OXA1L.

It localises to the mitochondrion. This is Large ribosomal subunit protein bL20m (Mrpl20) from Mus musculus (Mouse).